Consider the following 253-residue polypeptide: Prepilin leader peptidase/N-methyltransferase (253 aa).

A helical transmembrane segment spans residues 4 to 24; sequence VYLILFSIVSLILGSFSNVVI. Residues Cys48, Cys51, Cys73, and Cys76 each coordinate Zn(2+). 6 consecutive transmembrane segments (helical) span residues 80–100, 106–126, 129–149, 159–179, 198–218, and 230–250; these read ISLS…PIYW, VDSF…VIDF, MLLP…YVQQ, IIGG…VRLF, TLIG…IAFI, and CLYI…FFSI.

Belongs to the peptidase A24 family. It depends on Zn(2+) as a cofactor.

It is found in the cell inner membrane. It carries out the reaction Typically cleaves a -Gly-|-Phe- bond to release an N-terminal, basic peptide of 5-8 residues from type IV prepilin, and then N-methylates the new N-terminal amino group, the methyl donor being S-adenosyl-L-methionine.. Plays an essential role in type IV pili and type II pseudopili formation by proteolytically removing the leader sequence from substrate proteins and subsequently monomethylating the alpha-amino group of the newly exposed N-terminal phenylalanine. The sequence is that of Prepilin leader peptidase/N-methyltransferase (tcpJ) from Vibrio cholerae serotype O1 (strain ATCC 39315 / El Tor Inaba N16961).